We begin with the raw amino-acid sequence, 182 residues long: NAD(P)H-quinone oxidoreductase subunit I, chloroplastic (182 aa).

4Fe-4S ferredoxin-type domains follow at residues 52–81 (GRIH…VDWE) and 92–121 (KSYS…MTEE). Residues C61, C64, C67, C71, C101, C104, C107, and C111 each coordinate [4Fe-4S] cluster.

Belongs to the complex I 23 kDa subunit family. As to quaternary structure, NDH is composed of at least 16 different subunits, 5 of which are encoded in the nucleus. It depends on [4Fe-4S] cluster as a cofactor.

The protein localises to the plastid. It is found in the chloroplast thylakoid membrane. The enzyme catalyses a plastoquinone + NADH + (n+1) H(+)(in) = a plastoquinol + NAD(+) + n H(+)(out). It carries out the reaction a plastoquinone + NADPH + (n+1) H(+)(in) = a plastoquinol + NADP(+) + n H(+)(out). Functionally, NDH shuttles electrons from NAD(P)H:plastoquinone, via FMN and iron-sulfur (Fe-S) centers, to quinones in the photosynthetic chain and possibly in a chloroplast respiratory chain. The immediate electron acceptor for the enzyme in this species is believed to be plastoquinone. Couples the redox reaction to proton translocation, and thus conserves the redox energy in a proton gradient. This chain is NAD(P)H-quinone oxidoreductase subunit I, chloroplastic, found in Chaetosphaeridium globosum (Charophycean green alga).